Reading from the N-terminus, the 75-residue chain is Protein B7 (75 aa).

This chain is Protein B7 (B7), found in Human herpesvirus 6B (strain Z29) (HHV-6 variant B).